A 448-amino-acid polypeptide reads, in one-letter code: Methylenetetrahydrofolate--tRNA-(uracil-5-)-methyltransferase TrmFO (448 aa).

13 to 18 is an FAD binding site; it reads GAGLAG.

This sequence belongs to the MnmG family. TrmFO subfamily. It depends on FAD as a cofactor.

The protein resides in the cytoplasm. The enzyme catalyses uridine(54) in tRNA + (6R)-5,10-methylene-5,6,7,8-tetrahydrofolate + NADH + H(+) = 5-methyluridine(54) in tRNA + (6S)-5,6,7,8-tetrahydrofolate + NAD(+). It catalyses the reaction uridine(54) in tRNA + (6R)-5,10-methylene-5,6,7,8-tetrahydrofolate + NADPH + H(+) = 5-methyluridine(54) in tRNA + (6S)-5,6,7,8-tetrahydrofolate + NADP(+). Catalyzes the folate-dependent formation of 5-methyl-uridine at position 54 (M-5-U54) in all tRNAs. The sequence is that of Methylenetetrahydrofolate--tRNA-(uracil-5-)-methyltransferase TrmFO from Streptococcus pyogenes serotype M6 (strain ATCC BAA-946 / MGAS10394).